A 138-amino-acid chain; its full sequence is Holo-[acyl-carrier-protein] synthase (138 aa).

Residues D8 and E60 each contribute to the Mg(2+) site.

The protein belongs to the P-Pant transferase superfamily. AcpS family. The cofactor is Mg(2+).

It localises to the cytoplasm. The enzyme catalyses apo-[ACP] + CoA = holo-[ACP] + adenosine 3',5'-bisphosphate + H(+). Transfers the 4'-phosphopantetheine moiety from coenzyme A to a Ser of acyl-carrier-protein. In Magnetococcus marinus (strain ATCC BAA-1437 / JCM 17883 / MC-1), this protein is Holo-[acyl-carrier-protein] synthase.